The sequence spans 475 residues: Splicing factor U2AF 65 kDa subunit (475 aa).

The tract at residues 1–90 is disordered; it reads MSDFDEFERQ…RHEKKKKVRK (90 aa). At Ser-2 the chain carries N-acetylserine. Residue Ser-2 is modified to Phosphoserine. Residues 2–93 form a required for interaction with PRPF19 region; it reads SDFDEFERQL…KKKKVRKYWD (92 aa). Positions 7–22 are enriched in basic and acidic residues; that stretch reads FERQLNENKQERDKEN. Lys-15 carries the post-translational modification 5-hydroxylysine; by JMJD6; alternate. Lys-15 participates in a covalent cross-link: Glycyl lysine isopeptide (Lys-Gly) (interchain with G-Cter in SUMO2); alternate. Residues 17 to 47 form a necessary and sufficient to stimulate pre-mRNAs 3'-end cleavage in a CFIm complex-dependent manner region; it reads ERDKENRHRKRSHSRSRSRDRKRRSRSRDRR. Residues 23–46 are compositionally biased toward basic residues; the sequence is RHRKRSHSRSRSRDRKRRSRSRDR. Basic and acidic residues predominate over residues 47-56; that stretch reads RNRDQRSASR. Residue Lys-70 forms a Glycyl lysine isopeptide (Lys-Gly) (interchain with G-Cter in SUMO2); alternate linkage. Lys-70 is subject to N6-acetyllysine; alternate. Ser-79 bears the Phosphoserine mark. Over residues 79–89 the composition is skewed to basic residues; sequence SPRHEKKKKVR. 3 RRM domains span residues 149–231, 259–337, and 385–466; these read RRLY…RPHD, HKLF…RASV, and LPEE…YCDP. Position 276 is a 5-hydroxylysine; by JMJD6 (Lys-276). A Phosphoserine modification is found at Ser-294.

Belongs to the splicing factor SR family. As to quaternary structure, interacts with U2AF1L4. Heterodimer with U2AF1. Binds unphosphorylated SF1. Interacts with SCAF11 and SNW1. Interacts with ZRSR2/U2AF1-RS2. Interacts with RBM17. Interacts with PRPF19; the interaction is direct. Interacts with POLR2A (via the C-terminal domain); Interacts with PRPF19; the interaction is direct. Interacts with POLR2A (via the C-terminal domain); recruits PRPF19 and the Prp19 complex to the pre-mRNA. Interacts with KHDC4 (Isoform 2). Interacts with ZRSR2. Interacts with the SF3B complex composed of SF3B1, SF3B2, SF3B3, SF3B4, SF3B5, SF3B6 and PHF5A. Interacts (via N-terminus) with CPSF7 (via C-terminus); this interaction stimulates pre-mRNA 3'-end processing by promoting the recruitment of the CFIm complex to cleavage and polyadenylation signals. Interacts with ARGLU1; interaction may be involved in ARGLU1-mediated modulation of alternative splicing. Lysyl-hydroxylation at Lys-15 and Lys-276 affects the mRNA splicing activity of the protein, leading to regulate some, but not all, alternative splicing events.

It is found in the nucleus. In terms of biological role, plays a role in pre-mRNA splicing and 3'-end processing. By recruiting PRPF19 and the PRP19C/Prp19 complex/NTC/Nineteen complex to the RNA polymerase II C-terminal domain (CTD), and thereby pre-mRNA, may couple transcription to splicing. Required for the export of mRNA out of the nucleus, even if the mRNA is encoded by an intron-less gene. Positively regulates pre-mRNA 3'-end processing by recruiting the CFIm complex to cleavage and polyadenylation signals. This Mus musculus (Mouse) protein is Splicing factor U2AF 65 kDa subunit (U2af2).